Reading from the N-terminus, the 645-residue chain is Acetyl-coenzyme A synthetase 2 (645 aa).

CoA-binding positions include 190-193 (RGGK), Thr308, and Asn332. Residues 384–386 (GEP), 408–413 (DTWWQT), Asp497, and Arg512 contribute to the ATP site. Ser520 contributes to the CoA binding site. Arg523 is a binding site for ATP. 3 residues coordinate Mg(2+): Val534, His536, and Val539. Lys606 is subject to N6-acetyllysine.

This sequence belongs to the ATP-dependent AMP-binding enzyme family. Mg(2+) serves as cofactor. Acetylated. Deacetylation by the SIR2-homolog deacetylase activates the enzyme.

It catalyses the reaction acetate + ATP + CoA = acetyl-CoA + AMP + diphosphate. Functionally, catalyzes the conversion of acetate into acetyl-CoA (AcCoA), an essential intermediate at the junction of anabolic and catabolic pathways. AcsA undergoes a two-step reaction. In the first half reaction, AcsA combines acetate with ATP to form acetyl-adenylate (AcAMP) intermediate. In the second half reaction, it can then transfer the acetyl group from AcAMP to the sulfhydryl group of CoA, forming the product AcCoA. In Pseudomonas aeruginosa (strain ATCC 15692 / DSM 22644 / CIP 104116 / JCM 14847 / LMG 12228 / 1C / PRS 101 / PAO1), this protein is Acetyl-coenzyme A synthetase 2.